Consider the following 189-residue polypeptide: Glucose-6-phosphate isomerase (189 aa).

Residues His88, His90, Glu97, and His136 each contribute to the Fe cation site.

It belongs to the archaeal-type GPI family. Homodimer.

The protein resides in the cytoplasm. The enzyme catalyses alpha-D-glucose 6-phosphate = beta-D-fructose 6-phosphate. It functions in the pathway carbohydrate degradation; glycolysis; D-glyceraldehyde 3-phosphate and glycerone phosphate from D-glucose: step 2/4. The chain is Glucose-6-phosphate isomerase from Thermococcus kodakarensis (strain ATCC BAA-918 / JCM 12380 / KOD1) (Pyrococcus kodakaraensis (strain KOD1)).